A 232-amino-acid chain; its full sequence is MVQSKEQRVHGVFEKIYKNYDQMNSVISFKQHKKWRDKTMQLMNVPKGATALDVCCGTGDWTIALADAAGETGEIKGLDFSKNMLSIAEQKTESYSQIELIHGNAMELPFPDNTFDYVTIGFGLRNVPDYLTVLKEMARVVKPGGQVVCLETSQPEMFGFKQLYFLYFRFIMPMFGKLFAKSFKEYSWLQESAREFPGMKELAALFEEAGLKNVQYHPFTGGVAATHVGWKR.

Residues Thr58, Asp79, and 104–105 (NA) contribute to the S-adenosyl-L-methionine site.

It belongs to the class I-like SAM-binding methyltransferase superfamily. MenG/UbiE family.

The enzyme catalyses a 2-demethylmenaquinol + S-adenosyl-L-methionine = a menaquinol + S-adenosyl-L-homocysteine + H(+). It functions in the pathway quinol/quinone metabolism; menaquinone biosynthesis; menaquinol from 1,4-dihydroxy-2-naphthoate: step 2/2. Its function is as follows. Methyltransferase required for the conversion of demethylmenaquinol (DMKH2) to menaquinol (MKH2). The polypeptide is Demethylmenaquinone methyltransferase (Bacillus licheniformis (strain ATCC 14580 / DSM 13 / JCM 2505 / CCUG 7422 / NBRC 12200 / NCIMB 9375 / NCTC 10341 / NRRL NRS-1264 / Gibson 46)).